The chain runs to 420 residues: Torsin-4A-A (420 aa).

The chain crosses the membrane as a helical span at residues Cys130–Asp150. Gly202–Ser209 lines the ATP pocket.

It belongs to the ClpA/ClpB family. Torsin subfamily.

The protein localises to the membrane. This Xenopus laevis (African clawed frog) protein is Torsin-4A-A (tor4a-a).